We begin with the raw amino-acid sequence, 98 residues long: Large ribosomal subunit protein bL28 (98 aa).

This sequence belongs to the bacterial ribosomal protein bL28 family.

In Mesorhizobium japonicum (strain LMG 29417 / CECT 9101 / MAFF 303099) (Mesorhizobium loti (strain MAFF 303099)), this protein is Large ribosomal subunit protein bL28.